Consider the following 574-residue polypeptide: Putative dehydratase IlvD1 (574 aa).

Residues cysteine 124 and cysteine 197 each coordinate [4Fe-4S] cluster.

The protein belongs to the IlvD/Edd family. It depends on [4Fe-4S] cluster as a cofactor.

In terms of biological role, involved in the degradation of galactose via the DeLey-Doudoroff pathway. The sequence is that of Putative dehydratase IlvD1 (ilvD1) from Rhizobium meliloti (strain 1021) (Ensifer meliloti).